Consider the following 143-residue polypeptide: UPF0047 protein MTH_771 (143 aa).

Belongs to the UPF0047 family.

The sequence is that of UPF0047 protein MTH_771 from Methanothermobacter thermautotrophicus (strain ATCC 29096 / DSM 1053 / JCM 10044 / NBRC 100330 / Delta H) (Methanobacterium thermoautotrophicum).